We begin with the raw amino-acid sequence, 334 residues long: Thioredoxin reductase (334 aa).

FAD contacts are provided by residues serine 10 to alanine 13, isoleucine 39 to alanine 40, glutamine 44, asparagine 53, valine 86, cysteine 143, aspartate 287, and arginine 294 to alanine 296. A disulfide bond links cysteine 140 and cysteine 143.

This sequence belongs to the class-II pyridine nucleotide-disulfide oxidoreductase family. Homodimer. Requires FAD as cofactor.

The protein localises to the cytoplasm. It carries out the reaction [thioredoxin]-dithiol + NADP(+) = [thioredoxin]-disulfide + NADPH + H(+). The sequence is that of Thioredoxin reductase (cys-9) from Neurospora crassa (strain ATCC 24698 / 74-OR23-1A / CBS 708.71 / DSM 1257 / FGSC 987).